The following is a 146-amino-acid chain: Probable glycine cleavage system H protein 3 (146 aa).

Residues 29-111 form the Lipoyl-binding domain; it reads VVSVGMTDLG…PYGSWIIKVS (83 aa). Lysine 71 bears the N6-lipoyllysine mark.

Belongs to the GcvH family. As to quaternary structure, the glycine cleavage system is composed of four proteins: P, T, L and H. (R)-lipoate serves as cofactor.

The glycine cleavage system catalyzes the degradation of glycine. The H protein shuttles the methylamine group of glycine from the P protein to the T protein. In Sulfolobus acidocaldarius (strain ATCC 33909 / DSM 639 / JCM 8929 / NBRC 15157 / NCIMB 11770), this protein is Probable glycine cleavage system H protein 3.